We begin with the raw amino-acid sequence, 333 residues long: Protoheme IX farnesyltransferase (333 aa).

7 helical membrane passes run 64 to 84, 110 to 130, 133 to 153, 161 to 181, 189 to 209, 246 to 266, and 287 to 307; these read LICT…LNCL, TVFL…VSGV, LAAG…TVIL, IVFG…AATG, WLFG…AILL, IMGV…LLPF, and AKSL…LLLI.

It belongs to the UbiA prenyltransferase family. Protoheme IX farnesyltransferase subfamily.

Its subcellular location is the cell inner membrane. It catalyses the reaction heme b + (2E,6E)-farnesyl diphosphate + H2O = Fe(II)-heme o + diphosphate. The protein operates within porphyrin-containing compound metabolism; heme O biosynthesis; heme O from protoheme: step 1/1. Functionally, converts heme B (protoheme IX) to heme O by substitution of the vinyl group on carbon 2 of heme B porphyrin ring with a hydroxyethyl farnesyl side group. In Prochlorococcus marinus (strain AS9601), this protein is Protoheme IX farnesyltransferase.